The chain runs to 130 residues: uncharacterized protein (130 aa).

Positions 41 to 64 are disordered; it reads DDKDDHMDNQPKTSQTSKKVKLSE.

This is an uncharacterized protein from Streptococcus pyogenes serotype M6 (strain ATCC BAA-946 / MGAS10394).